Here is a 455-residue protein sequence, read N- to C-terminus: MNVWTKFFQPPKHIKEIEDQEVVKKKYKYWRIRIFYSMFIGYIFYYFTRKSFTFAMPTLIADLGFDKAQLGIIGSTLYFSYGISKFVSGVMSDQSNPRYFMAIGLMITGLTNIFFGMSSSIVLFALWWGLNGWFQGWGWPPCARLLTHWYAKSERGTWWSVWSTSHNIGGALIPILTGFIIDYSGWRGAMYVPGILCIGMGLVLINRLRDTPQSLGLPPIEKYKRDPHHAHHEGKSASEGTEEIERELSTREILFTYVLTNQWLWFLAAASFFIYIVRMAVNDWSALFLIETKHYAAVKANFCVSLFEIGGLFGMLVAGWLSDKISKGNRGPMNVLFSLGLLFAILGMWFSRSHNQWWVDGTLLFVIGFFLYGPQMMIGLAAAELSHKKAAGTASGFTGWFAYFGATFAGYPLGKVTDVWGWKGFFIALLACASIALLLFLPTWNATEKNTRSKA.

Helical transmembrane passes span 34–54, 70–90, 113–133, 161–181, and 185–205; these read IFYSMFIGYIFYYFTRKSFTF, LGIIGSTLYFSYGISKFVSGV, IFFGMSSSIVLFALWWGLNGW, VWSTSHNIGGALIPILTGFII, and GWRGAMYVPGILCIGMGLVLI. The interval 219–242 is disordered; sequence PIEKYKRDPHHAHHEGKSASEGTE. 6 consecutive transmembrane segments (helical) span residues 257-277, 302-322, 331-351, 363-383, 394-414, and 424-444; these read YVLTNQWLWFLAAASFFIYIV, FCVSLFEIGGLFGMLVAGWLS, GPMNVLFSLGLLFAILGMWFS, LLFVIGFFLYGPQMMIGLAAA, ASGFTGWFAYFGATFAGYPLG, and GFFIALLACASIALLLFLPTW.

The protein belongs to the major facilitator superfamily. Organophosphate:Pi antiporter (OPA) (TC 2.A.1.4) family.

It is found in the cell membrane. Transport protein for sugar phosphate uptake. This Chlamydia pneumoniae (Chlamydophila pneumoniae) protein is Probable hexose phosphate transport protein (uhpC).